The chain runs to 259 residues: Putative protein-disulfide oxidoreductase RBE_1288 (259 aa).

The N-terminal stretch at 1–20 is a signal peptide; sequence MRNSFITLIFLLLLSGCSEE. The segment at 25 to 54 is disordered; that stretch reads VEQESSESITPAQASTSDENNNQTTETTTP. The segment covering 33–42 has biased composition (polar residues); the sequence is ITPAQASTSD. A compositionally biased stretch (low complexity) spans 43-54; it reads ENNNQTTETTTP. The Thioredoxin domain maps to 47-251; sequence QTTETTTPAV…ISAAIDKAIE (205 aa). Cys104 and Cys107 form a disulfide bridge.

It belongs to the thioredoxin family. DsbA subfamily.

It is found in the periplasm. Functionally, may be required for disulfide bond formation in some proteins. This chain is Putative protein-disulfide oxidoreductase RBE_1288, found in Rickettsia bellii (strain RML369-C).